Consider the following 1024-residue polypeptide: Beta-galactosidase (1024 aa).

2 residues coordinate substrate: Asn-103 and Asp-202. Asp-202 provides a ligand contact to Na(+). The Mg(2+) site is built by Glu-417, His-419, and Glu-462. Residues Glu-462 and 538–541 (EYAH) contribute to the substrate site. The active-site Proton donor is Glu-462. Catalysis depends on Glu-538, which acts as the Nucleophile. Mg(2+) is bound at residue Asn-598. The Na(+) site is built by Phe-602 and Asn-605. Substrate is bound by residues Asn-605 and Trp-1000.

This sequence belongs to the glycosyl hydrolase 2 family. As to quaternary structure, homotetramer. It depends on Mg(2+) as a cofactor. Requires Na(+) as cofactor.

The enzyme catalyses Hydrolysis of terminal non-reducing beta-D-galactose residues in beta-D-galactosides.. In Escherichia coli O1:K1 / APEC, this protein is Beta-galactosidase.